The sequence spans 257 residues: 5'-nucleotidase SurE (257 aa).

A divalent metal cation contacts are provided by Asp8, Asp9, Ser40, and Asn92.

The protein belongs to the SurE nucleotidase family. The cofactor is a divalent metal cation.

The protein resides in the cytoplasm. It carries out the reaction a ribonucleoside 5'-phosphate + H2O = a ribonucleoside + phosphate. Its function is as follows. Nucleotidase that shows phosphatase activity on nucleoside 5'-monophosphates. The chain is 5'-nucleotidase SurE from Rhizobium rhizogenes (strain K84 / ATCC BAA-868) (Agrobacterium radiobacter).